Consider the following 193-residue polypeptide: Protein GrpE (193 aa).

Residues 1–26 (MTKKHHKEQEEIQETIKTEAAEENVG) are disordered. Positions 7 to 20 (KEQEEIQETIKTEA) are enriched in basic and acidic residues.

It belongs to the GrpE family. In terms of assembly, homodimer.

Its subcellular location is the cytoplasm. Functionally, participates actively in the response to hyperosmotic and heat shock by preventing the aggregation of stress-denatured proteins, in association with DnaK and GrpE. It is the nucleotide exchange factor for DnaK and may function as a thermosensor. Unfolded proteins bind initially to DnaJ; upon interaction with the DnaJ-bound protein, DnaK hydrolyzes its bound ATP, resulting in the formation of a stable complex. GrpE releases ADP from DnaK; ATP binding to DnaK triggers the release of the substrate protein, thus completing the reaction cycle. Several rounds of ATP-dependent interactions between DnaJ, DnaK and GrpE are required for fully efficient folding. The protein is Protein GrpE of Chlorobaculum parvum (strain DSM 263 / NCIMB 8327) (Chlorobium vibrioforme subsp. thiosulfatophilum).